A 260-amino-acid chain; its full sequence is Coiled-coil domain-containing protein 127 (260 aa).

Residues 49–135 adopt a coiled-coil conformation; that stretch reads QKEVEKEREA…QVMQEKRQVQ (87 aa).

In Homo sapiens (Human), this protein is Coiled-coil domain-containing protein 127 (CCDC127).